The primary structure comprises 288 residues: Fructose-bisphosphate aldolase (288 aa).

Residue serine 49 coordinates D-glyceraldehyde 3-phosphate. Aspartate 84 functions as the Proton donor in the catalytic mechanism. Zn(2+)-binding residues include histidine 85, aspartate 105, glutamate 135, and histidine 177. Glycine 178 serves as a coordination point for dihydroxyacetone phosphate. Residue histidine 206 participates in Zn(2+) binding. Residues 207-209 and 228-231 contribute to the dihydroxyacetone phosphate site; these read GGS and NINT.

Belongs to the class II fructose-bisphosphate aldolase family. In terms of assembly, homodimer. The cofactor is Zn(2+).

The enzyme catalyses beta-D-fructose 1,6-bisphosphate = D-glyceraldehyde 3-phosphate + dihydroxyacetone phosphate. Its pathway is carbohydrate degradation; glycolysis; D-glyceraldehyde 3-phosphate and glycerone phosphate from D-glucose: step 4/4. Its function is as follows. Catalyzes the aldol condensation of dihydroxyacetone phosphate (DHAP or glycerone-phosphate) with glyceraldehyde 3-phosphate (G3P) to form fructose 1,6-bisphosphate (FBP) in gluconeogenesis and the reverse reaction in glycolysis. The polypeptide is Fructose-bisphosphate aldolase (fba) (Mycoplasma genitalium (strain ATCC 33530 / DSM 19775 / NCTC 10195 / G37) (Mycoplasmoides genitalium)).